Reading from the N-terminus, the 140-residue chain is UPF0306 protein YhbP (140 aa).

The protein belongs to the UPF0306 family.

This chain is UPF0306 protein YhbP, found in Escherichia coli O6:H1 (strain CFT073 / ATCC 700928 / UPEC).